A 475-amino-acid polypeptide reads, in one-letter code: tRNA-2-methylthio-N(6)-dimethylallyladenosine synthase (475 aa).

In terms of domain architecture, MTTase N-terminal spans 2 to 119 (AKLHITTWGC…LPEMINKIRG (118 aa)). [4Fe-4S] cluster contacts are provided by Cys11, Cys48, Cys82, Cys156, Cys160, and Cys163. In terms of domain architecture, Radical SAM core spans 142–374 (RAEGPTAFVS…QQRINHQAMQ (233 aa)). The TRAM domain occupies 377–440 (RAMLGTEQRV…TNSLRGEVVR (64 aa)).

The protein belongs to the methylthiotransferase family. MiaB subfamily. As to quaternary structure, monomer. Requires [4Fe-4S] cluster as cofactor.

It is found in the cytoplasm. The enzyme catalyses N(6)-dimethylallyladenosine(37) in tRNA + (sulfur carrier)-SH + AH2 + 2 S-adenosyl-L-methionine = 2-methylsulfanyl-N(6)-dimethylallyladenosine(37) in tRNA + (sulfur carrier)-H + 5'-deoxyadenosine + L-methionine + A + S-adenosyl-L-homocysteine + 2 H(+). In terms of biological role, catalyzes the methylthiolation of N6-(dimethylallyl)adenosine (i(6)A), leading to the formation of 2-methylthio-N6-(dimethylallyl)adenosine (ms(2)i(6)A) at position 37 in tRNAs that read codons beginning with uridine. This chain is tRNA-2-methylthio-N(6)-dimethylallyladenosine synthase, found in Actinobacillus pleuropneumoniae serotype 3 (strain JL03).